We begin with the raw amino-acid sequence, 121 residues long: Small ribosomal subunit protein uS13 (121 aa).

A disordered region spans residues 93-121 (RGLPMRGQRTRTNARTRKGPRKGAAALKK).

This sequence belongs to the universal ribosomal protein uS13 family. As to quaternary structure, part of the 30S ribosomal subunit. Forms a loose heterodimer with protein S19. Forms two bridges to the 50S subunit in the 70S ribosome.

Functionally, located at the top of the head of the 30S subunit, it contacts several helices of the 16S rRNA. In the 70S ribosome it contacts the 23S rRNA (bridge B1a) and protein L5 of the 50S subunit (bridge B1b), connecting the 2 subunits; these bridges are implicated in subunit movement. Contacts the tRNAs in the A and P-sites. The chain is Small ribosomal subunit protein uS13 from Acidovorax ebreus (strain TPSY) (Diaphorobacter sp. (strain TPSY)).